A 188-amino-acid polypeptide reads, in one-letter code: Multiple organellar RNA editing factor 7, mitochondrial (188 aa).

Residues methionine 1–serine 20 constitute a mitochondrion transit peptide. Positions aspartate 169–isoleucine 188 are disordered. Residues valine 174–isoleucine 188 show a composition bias toward basic residues.

Belongs to the MORF family. In terms of assembly, heterodimers with MORF8/RIP1, MORF5/RIP5 and MORF6/RIP6.

It localises to the mitochondrion. Functionally, involved in organellar RNA editing. Required for the processing of few RNA editing sites in mitochondria. This is Multiple organellar RNA editing factor 7, mitochondrial from Arabidopsis thaliana (Mouse-ear cress).